Reading from the N-terminus, the 637-residue chain is Chaperone protein HtpG (637 aa).

An a; substrate-binding region spans residues 1–345; that stretch reads MSQQETHGFQ…SNDLPLNVSR (345 aa). The tract at residues 346 to 562 is b; it reads EILQDNHITK…EGEMSSQMIK (217 aa). The c stretch occupies residues 563 to 637; the sequence is LMQAAGQPVP…MNQMLLANLK (75 aa).

This sequence belongs to the heat shock protein 90 family. In terms of assembly, homodimer.

The protein localises to the cytoplasm. Molecular chaperone. Has ATPase activity. The protein is Chaperone protein HtpG of Shewanella sp. (strain MR-7).